Here is a 345-residue protein sequence, read N- to C-terminus: Mitochondrial substrate carrier family protein J (345 aa).

The Mitochondrial intermembrane segment spans residues 1–31; it reads MSSSHTIQETKEVHTKTNKRIQWDDLDPKRY. Solcar repeat units follow at residues 30 to 118, 129 to 217, and 255 to 342; these read RYYF…VKQG, DLLF…SKSK, and EDPI…VKKL. Residues 32-52 traverse the membrane as a helical segment; it reads YFYNFLLGGSIDLLMFPLDVI. At 53–88 the chain is on the mitochondrial matrix side; the sequence is RTRLQVQGSQNVIQSFPQYNGTFDGFKKLIRLEGKR. Residues 89 to 110 form a helical membrane-spanning segment; the sequence is ALYKGFLTSECGYLCSRAIYFG. Residues 111-129 lie on the Mitochondrial intermembrane side of the membrane; that stretch reads SYEFVKQGFLKGRSDSDSD. A helical transmembrane segment spans residues 130 to 150; that stretch reads LLFVTTISGAISEALASVIWV. The Mitochondrial matrix segment spans residues 151–191; the sequence is PFDVATQSVQIQGSLSKPKYKGGSDVFKKIYGERGIKGLYK. The helical transmembrane segment at 192–208 threads the bilayer; the sequence is GFGATIIRNVPYSGIWW. Residues 209–257 lie on the Mitochondrial intermembrane side of the membrane; sequence GTYEISKSKLTQFNIRQKLGLKERSSHSLAVSAEIDKNNPSHEVENEDP. A helical transmembrane segment spans residues 258 to 278; the sequence is IIHFISGFFAAVFATSITNPL. The Mitochondrial matrix segment spans residues 279 to 316; it reads DVAKTRLQTGVFPENEKPNFYTIIKSTIRKEGIRALWK. Residues 317 to 337 traverse the membrane as a helical segment; that stretch reads GLVPSLLTSTPYSMISIFLYE. The Mitochondrial intermembrane segment spans residues 338–345; the sequence is EVKKLSLK.

It belongs to the mitochondrial carrier (TC 2.A.29) family.

Its subcellular location is the mitochondrion inner membrane. In terms of biological role, mitochondrial solute carriers shuttle metabolites, nucleotides, and cofactors through the mitochondrial inner membrane. In Dictyostelium discoideum (Social amoeba), this protein is Mitochondrial substrate carrier family protein J (mcfJ).